The following is a 145-amino-acid chain: Protein SprT-like (145 aa).

The region spanning 5–141 (DYVREVSLAD…CGRCHGRLIK (137 aa)) is the SprT-like domain. Position 64 (His64) interacts with Zn(2+). Glu65 is a catalytic residue. A Zn(2+)-binding site is contributed by His68.

It belongs to the SprT family. Zn(2+) serves as cofactor.

The protein localises to the cytoplasm. The protein is Protein SprT-like of Streptococcus equi subsp. zooepidemicus (strain H70).